A 438-amino-acid polypeptide reads, in one-letter code: 3-phosphoshikimate 1-carboxyvinyltransferase (438 aa).

Lys-21 contacts phosphoenolpyruvate. The 3-phosphoshikimate site is built by Ser-22 and Arg-26. The phosphoenolpyruvate stretch occupies residues 93–96; that stretch reads NSGT. Residues Gly-95, Thr-96, and Arg-123 each contribute to the phosphoenolpyruvate site. Residues Ser-167, Ala-168, Gln-169, Asp-315, and Lys-342 each contribute to the 3-phosphoshikimate site. Residue Gln-169 coordinates phosphoenolpyruvate. The Proton acceptor role is filled by Asp-315. Positions 346 and 387 each coordinate phosphoenolpyruvate.

The protein belongs to the EPSP synthase family. In terms of assembly, homodimer or homotetramer.

The protein resides in the cytoplasm. The catalysed reaction is 3-phosphoshikimate + phosphoenolpyruvate = 5-O-(1-carboxyvinyl)-3-phosphoshikimate + phosphate. Its pathway is metabolic intermediate biosynthesis; chorismate biosynthesis; chorismate from D-erythrose 4-phosphate and phosphoenolpyruvate: step 6/7. Catalyzes the transfer of the enolpyruvyl moiety of phosphoenolpyruvate (PEP) to the 5-hydroxyl of shikimate-3-phosphate (S3P) to produce enolpyruvyl shikimate-3-phosphate and inorganic phosphate. The sequence is that of 3-phosphoshikimate 1-carboxyvinyltransferase from Coxiella burnetii (strain RSA 493 / Nine Mile phase I).